The following is a 188-amino-acid chain: UPF0301 protein Tcr_1827 (188 aa).

The protein belongs to the UPF0301 (AlgH) family.

The sequence is that of UPF0301 protein Tcr_1827 from Hydrogenovibrio crunogenus (strain DSM 25203 / XCL-2) (Thiomicrospira crunogena).